Consider the following 167-residue polypeptide: uncharacterized protein (167 aa).

A compositionally biased stretch (basic residues) spans 1-10 (MPLRRCRAWR). The disordered stretch occupies residues 1–23 (MPLRRCRAWRGHSQPGTGSRSNE).

This is an uncharacterized protein from Sinorhizobium fredii (strain NBRC 101917 / NGR234).